The sequence spans 146 residues: Hemoglobin subunit beta (146 aa).

V1 carries the post-translational modification N-acetylvaline. The Globin domain maps to 2–146 (HLTAEEKDAV…VANALAHRYH (145 aa)). Phosphoserine is present on S44. K59 is modified (N6-acetyllysine). Heme b is bound at residue H63. K82 bears the N6-acetyllysine mark. H92 is a binding site for heme b. At C93 the chain carries S-nitrosocysteine.

The protein belongs to the globin family. As to quaternary structure, heterotetramer of two alpha chains and two beta chains. In terms of tissue distribution, red blood cells.

Functionally, involved in oxygen transport from the lung to the various peripheral tissues. This Hippopotamus amphibius (Hippopotamus) protein is Hemoglobin subunit beta (HBB).